A 287-amino-acid polypeptide reads, in one-letter code: Membrane protein insertase YidC 2 (287 aa).

An N-terminal signal peptide occupies residues 1-26; the sequence is MKKKKRFKQKLLIASLVIGLVAVLSG. Cys-27 carries the N-palmitoyl cysteine lipid modification. A lipid anchor (S-diacylglycerol cysteine) is attached at Cys-27. Transmembrane regions (helical) follow at residues 65 to 85, 135 to 155, 178 to 198, 207 to 224, and 228 to 250; these read YAVG…PLMI, MMGC…YQAI, YILP…SMMG, AMIV…GITL, and LALY…NNPF.

The protein belongs to the OXA1/ALB3/YidC family. Type 2 subfamily.

Its subcellular location is the cell membrane. Required for the insertion and/or proper folding and/or complex formation of integral membrane proteins into the membrane. Involved in integration of membrane proteins that insert both dependently and independently of the Sec translocase complex, as well as at least some lipoproteins. The chain is Membrane protein insertase YidC 2 from Listeria innocua serovar 6a (strain ATCC BAA-680 / CLIP 11262).